The following is a 263-amino-acid chain: Regulatory protein RecX (263 aa).

The protein belongs to the RecX family.

It is found in the cytoplasm. Modulates RecA activity. The protein is Regulatory protein RecX of Bacillus pumilus (strain SAFR-032).